The following is a 400-amino-acid chain: Formate-dependent phosphoribosylglycinamide formyltransferase (400 aa).

N(1)-(5-phospho-beta-D-ribosyl)glycinamide contacts are provided by residues glutamate 22–leucine 23 and glutamate 82. ATP contacts are provided by residues arginine 115, lysine 156, serine 161 to glutamine 166, glutamate 196 to isoleucine 199, and glutamate 204. An ATP-grasp domain is found at arginine 120–leucine 309. Positions 268 and 280 each coordinate Mg(2+). N(1)-(5-phospho-beta-D-ribosyl)glycinamide is bound by residues aspartate 287, lysine 361, and arginine 368 to arginine 369.

The protein belongs to the PurK/PurT family. Homodimer.

It catalyses the reaction N(1)-(5-phospho-beta-D-ribosyl)glycinamide + formate + ATP = N(2)-formyl-N(1)-(5-phospho-beta-D-ribosyl)glycinamide + ADP + phosphate + H(+). It participates in purine metabolism; IMP biosynthesis via de novo pathway; N(2)-formyl-N(1)-(5-phospho-D-ribosyl)glycinamide from N(1)-(5-phospho-D-ribosyl)glycinamide (formate route): step 1/1. In terms of biological role, involved in the de novo purine biosynthesis. Catalyzes the transfer of formate to 5-phospho-ribosyl-glycinamide (GAR), producing 5-phospho-ribosyl-N-formylglycinamide (FGAR). Formate is provided by PurU via hydrolysis of 10-formyl-tetrahydrofolate. In Xanthomonas euvesicatoria pv. vesicatoria (strain 85-10) (Xanthomonas campestris pv. vesicatoria), this protein is Formate-dependent phosphoribosylglycinamide formyltransferase.